The sequence spans 119 residues: Protein TusC (119 aa).

It belongs to the DsrF/TusC family. Heterohexamer, formed by a dimer of trimers. The hexameric TusBCD complex contains 2 copies each of TusB, TusC and TusD. The TusBCD complex interacts with TusE.

Its subcellular location is the cytoplasm. Part of a sulfur-relay system required for 2-thiolation of 5-methylaminomethyl-2-thiouridine (mnm(5)s(2)U) at tRNA wobble positions. This chain is Protein TusC, found in Buchnera aphidicola subsp. Acyrthosiphon pisum (strain APS) (Acyrthosiphon pisum symbiotic bacterium).